The following is a 572-amino-acid chain: Proline--tRNA ligase (572 aa).

It belongs to the class-II aminoacyl-tRNA synthetase family. ProS type 1 subfamily. As to quaternary structure, homodimer.

The protein localises to the cytoplasm. It catalyses the reaction tRNA(Pro) + L-proline + ATP = L-prolyl-tRNA(Pro) + AMP + diphosphate. In terms of biological role, catalyzes the attachment of proline to tRNA(Pro) in a two-step reaction: proline is first activated by ATP to form Pro-AMP and then transferred to the acceptor end of tRNA(Pro). As ProRS can inadvertently accommodate and process non-cognate amino acids such as alanine and cysteine, to avoid such errors it has two additional distinct editing activities against alanine. One activity is designated as 'pretransfer' editing and involves the tRNA(Pro)-independent hydrolysis of activated Ala-AMP. The other activity is designated 'posttransfer' editing and involves deacylation of mischarged Ala-tRNA(Pro). The misacylated Cys-tRNA(Pro) is not edited by ProRS. The polypeptide is Proline--tRNA ligase (Enterobacter sp. (strain 638)).